A 460-amino-acid polypeptide reads, in one-letter code: Oxysterols receptor LXR-beta (460 aa).

The span at 1–14 shows a compositional bias: low complexity; that stretch reads MSSPTTSSLDTPLP. The tract at residues 1-78 is disordered; it reads MSSPTTSSLD…PERKRKKGPA (78 aa). The transactivation AF-1; required for ligand-independent transactivation function stretch occupies residues 1-85; the sequence is MSSPTTSSLD…GPAPKMLGHE (85 aa). A compositionally biased stretch (pro residues) spans 36-45; the sequence is EPWPGGPDPD. Residues 84–161 constitute a DNA-binding region (nuclear receptor); it reads HELCRVCGDK…AGMREQCVLS (78 aa). 2 NR C4-type zinc fingers span residues 87 to 107 and 125 to 149; these read CRVCGDKASGFHYNVLSCEGC and CRGGGTCQMDAFMRRKCQQCRLRKC. The disordered stretch occupies residues 169-216; sequence KIRKQQQESQSQSQSPVGPQGSSSSASGPGASPGGSEAGSQGSGEGEG. Residues 175 to 198 show a composition bias toward low complexity; sequence QESQSQSQSPVGPQGSSSSASGPG. Positions 199–215 are enriched in gly residues; that stretch reads ASPGGSEAGSQGSGEGE. Residues 219 to 460 form a transactivation AF-2; required for ligand-dependent transactivation function; mediates interaction with CCAR2 region; sequence LTAAQELMIQ…LLSEIWDVHE (242 aa). In terms of domain architecture, NR LBD spans 222–460; the sequence is AQELMIQQLV…LLSEIWDVHE (239 aa). Residues Lys-409 and Lys-447 each participate in a glycyl lysine isopeptide (Lys-Gly) (interchain with G-Cter in SUMO2) cross-link.

Belongs to the nuclear hormone receptor family. NR1 subfamily. In terms of assembly, forms a heterodimer with RXR. Interacts with CCAR2 (via N-terminus) in a ligand-independent manner. Interacts (when sumoylated) with GPS2; interaction with GPS2 onto hepatic acute phase protein promoters prevents N-Cor corepressor complex dissociation. Interacts with ABCA12 and ABCA1; this interaction is required for ABCA1 localization to the cell surface and is necessary for its normal activity and stability. Post-translationally, sumoylated by SUMO2 at Lys-409 and Lys-447 during the hepatic acute phase response, leading to promote interaction with GPS2 and prevent N-Cor corepressor complex dissociation. In terms of tissue distribution, ubiquitous.

The protein resides in the nucleus. Functionally, nuclear receptor that exhibits a ligand-dependent transcriptional activation activity. Binds preferentially to double-stranded oligonucleotide direct repeats having the consensus half-site sequence 5'-AGGTCA-3' and 4-nt spacing (DR-4). Regulates cholesterol uptake through MYLIP-dependent ubiquitination of LDLR, VLDLR and LRP8; DLDLR and LRP8. Interplays functionally with RORA for the regulation of genes involved in liver metabolism. Induces LPCAT3-dependent phospholipid remodeling in endoplasmic reticulum (ER) membranes of hepatocytes, driving SREBF1 processing and lipogenesis. Via LPCAT3, triggers the incorporation of arachidonate into phosphatidylcholines of ER membranes, increasing membrane dynamics and enabling triacylglycerols transfer to nascent very low-density lipoprotein (VLDL) particles. Via LPCAT3 also counteracts lipid-induced ER stress response and inflammation, likely by modulating SRC kinase membrane compartmentalization and limiting the synthesis of lipid inflammatory mediators. Plays an anti-inflammatory role during the hepatic acute phase response by acting as a corepressor: inhibits the hepatic acute phase response by preventing dissociation of the N-Cor corepressor complex. The polypeptide is Oxysterols receptor LXR-beta (NR1H2) (Homo sapiens (Human)).